Consider the following 284-residue polypeptide: Pantothenate synthetase (284 aa).

ATP is bound at residue 30 to 37 (MGNLHEGH). Histidine 37 acts as the Proton donor in catalysis. A (R)-pantoate-binding site is contributed by glutamine 61. Glutamine 61 lines the beta-alanine pocket. 149–152 (GEKD) serves as a coordination point for ATP. Position 155 (glutamine 155) interacts with (R)-pantoate. Residues valine 178 and 186–189 (LSSR) each bind ATP.

This sequence belongs to the pantothenate synthetase family. Homodimer.

It localises to the cytoplasm. It catalyses the reaction (R)-pantoate + beta-alanine + ATP = (R)-pantothenate + AMP + diphosphate + H(+). Its pathway is cofactor biosynthesis; (R)-pantothenate biosynthesis; (R)-pantothenate from (R)-pantoate and beta-alanine: step 1/1. Catalyzes the condensation of pantoate with beta-alanine in an ATP-dependent reaction via a pantoyl-adenylate intermediate. The sequence is that of Pantothenate synthetase from Sodalis glossinidius (strain morsitans).